The chain runs to 58 residues: Ribulose bisphosphate carboxylase large chain (58 aa).

The propeptide occupies M1 to S2. P3 carries the N-acetylproline modification. At K14 the chain carries N6,N6,N6-trimethyllysine.

Belongs to the RuBisCO large chain family. Type I subfamily. As to quaternary structure, heterohexadecamer of 8 large chains and 8 small chains.

The protein localises to the plastid. Its subcellular location is the chloroplast. The catalysed reaction is 2 (2R)-3-phosphoglycerate + 2 H(+) = D-ribulose 1,5-bisphosphate + CO2 + H2O. It catalyses the reaction D-ribulose 1,5-bisphosphate + O2 = 2-phosphoglycolate + (2R)-3-phosphoglycerate + 2 H(+). RuBisCO catalyzes two reactions: the carboxylation of D-ribulose 1,5-bisphosphate, the primary event in carbon dioxide fixation, as well as the oxidative fragmentation of the pentose substrate in the photorespiration process. Both reactions occur simultaneously and in competition at the same active site. In Weinmannia silvicola (Towai), this protein is Ribulose bisphosphate carboxylase large chain (rbcL).